We begin with the raw amino-acid sequence, 79 residues long: uncharacterized protein (79 aa).

Residues 22 to 72 are compositionally biased toward low complexity; it reads NNNNNNNNNNNNNNNNNNNNNNNNNNNNNNNNNNNNNNNNNNNNNNNNNNN. The interval 22–79 is disordered; that stretch reads NNNNNNNNNNNNNNNNNNNNNNNNNNNNNNNNNNNNNNNNNNNNNNNNNNNKRFFFFG.

This is an uncharacterized protein from Dictyostelium discoideum (Social amoeba).